The sequence spans 147 residues: Hemoglobin subunit beta-2 (147 aa).

Residues 3–147 enclose the Globin domain; it reads EWTDEERTII…VVSALGRQYH (145 aa). Residues histidine 64 and histidine 93 each coordinate heme b.

It belongs to the globin family. Hb 2 is a heterotetramer of two alpha-2 and two beta-2 chains. Hb 3 is a heterotetramer of two alpha-1 and two beta-2 chains. Red blood cells.

Its function is as follows. Involved in oxygen transport from gills to the various peripheral tissues. This chain is Hemoglobin subunit beta-2 (hbb2), found in Gadus morhua (Atlantic cod).